Here is a 1215-residue protein sequence, read N- to C-terminus: Endoplasmic reticulum transmembrane helix translocase (1215 aa).

Over 1 to 27 the chain is Cytoplasmic; that stretch reads MTKKSFVSSPIVRDSTLLVPKSLIAKP. Residues 28–43 form a helical membrane-spanning segment; sequence YVLPFFPLYATFAQLY. The Lumenal portion of the chain corresponds to 44 to 56; sequence FQQYDRYIKGPEW. A helical membrane pass occupies residues 57–76; sequence TFVYLGTLVSLNILVMLMPA. Residues 77 to 188 are Cytoplasmic-facing; that stretch reads WNVKIKAKFN…ENSFDIPIPT (112 aa). The segment at 156–185 is A-domain; part 1; sequence KIGDFQKCKGHSGDLTHLKRLYGENSFDIP. The helical transmembrane segment at 189 to 216 threads the bilayer; sequence FMELFKEHAVAPLFVFQVFCVALWLLDE. Position 217 (phenylalanine 217) is a topological domain, lumenal. A helical membrane pass occupies residues 218-246; sequence WYYSLFNLFMIISMEAAAVFQRLTALKEF. The Cytoplasmic portion of the chain corresponds to 247 to 395; it reads RTMGIKPYTI…IYSAERVSVD (149 aa). The tract at residues 250–390 is A-domain; part 2; it reads GIKPYTINVF…LVRVMIYSAE (141 aa). Serine 324 is subject to Phosphoserine. A helical transmembrane segment spans residues 396 to 425; it reads NKEALMFILFLLIFAVIASWYVWVEGTKMG. Over 426–427 the chain is Lumenal; that stretch reads RI. A run of 2 helical transmembrane segments spans residues 428–442 and 446–464; these read QSKLILDCILIITSV and ELPMELTMAVNSSLAALAK. Residues 465–971 lie on the Cytoplasmic side of the membrane; sequence FYVYCTEPFR…APFTSKLANV (507 aa). A P-domain; part 1 region spans residues 466 to 495; that stretch reads YVYCTEPFRIPFAGRIDVCCFDKTGTLTGE. The 4-aspartylphosphate intermediate role is filled by aspartate 487. Mg(2+)-binding residues include aspartate 487 and threonine 489. ATP-binding positions include 487 to 489, phenylalanine 582, arginine 634, aspartate 699, and 816 to 820; these read DKT and DGTND. An N-domain region spans residues 497 to 674; that stretch reads LVFEGLAGIS…FNGFLIFHCP (178 aa). The P-domain; part 2 stretch occupies residues 677 to 837; it reads DDAIETIKML…HVGIALLNGT (161 aa). Mg(2+) is bound at residue aspartate 816. Positions 838-953 are arm-like; the sequence is EEGLKKLGEQ…DAQGDEAPAL (116 aa). Residue serine 936 is modified to Phosphoserine. The P-domain; part 3 stretch occupies residues 954–969; sequence KLGDASCAAPFTSKLA. A helical membrane pass occupies residues 972–1011; it reads SAVTNIIRQGRCALVNTIQMYKILALNCLISAYSLSIIYM. Residues 1012 to 1017 lie on the Lumenal side of the membrane; that stretch reads AGVKFG. The helical transmembrane segment at 1018–1035 threads the bilayer; sequence DGQATVSGLLLSVCFLSI. Residues 1036–1055 lie on the Cytoplasmic side of the membrane; the sequence is SRGKPLEKLSKQRPQSGIFN. The helical transmembrane segment at 1056–1084 threads the bilayer; the sequence is VYIMGSILSQFAVHIATLVYITTEIYKLE. Over 1085-1099 the chain is Lumenal; the sequence is PREPQVDLEKEFAPS. A helical membrane pass occupies residues 1100-1121; it reads LLNTGIFIIQLVQQVSTFAVNY. Residues 1122–1133 are Cytoplasmic-facing; it reads QGEPFRENIRSN. The helical transmembrane segment at 1134-1151 threads the bilayer; that stretch reads KGMYYGLLGVTGLALASA. At 1152–1168 the chain is on the lumenal side; sequence TEFLPELNEAMKFVPMT. Residues 1169-1197 form a helical membrane-spanning segment; it reads DDFKIKLTLTLLLDFFGSWGVEHFFKFFF. Over 1198-1215 the chain is Cytoplasmic; sequence MDDKPSDISVQQVKIASK.

This sequence belongs to the cation transport ATPase (P-type) (TC 3.A.3) family. Type V subfamily. Mg(2+) is required as a cofactor.

It localises to the endoplasmic reticulum membrane. It catalyses the reaction [protein]-with a C-terminal TM segment(out) + ATP + H2O = [protein]-with a C-terminal TM segment(in) + ADP + phosphate + H(+). Its activity is regulated as follows. The ATPase activity is stimulated by phosphatidylinositol 4-phosphate (PI4P). Endoplasmic reticulum translocase required to remove mitochondrial transmembrane proteins mistargeted to the endoplasmic reticulum. Acts as a dislocase that mediates the ATP-dependent extraction of mislocalized mitochondrial transmembrane proteins from the endoplasmic reticulum membrane. Specifically binds mitochondrial tail-anchored transmembrane proteins: has an atypically large substrate-binding pocket that recognizes and binds moderately hydrophobic transmembranes with short hydrophilic lumenal domains. This is Endoplasmic reticulum transmembrane helix translocase from Saccharomyces cerevisiae (strain ATCC 204508 / S288c) (Baker's yeast).